We begin with the raw amino-acid sequence, 455 residues long: MAGIPDHIQDQHLVEEDQPFDLEDWLPITASRNANWYYSAFHNVTAIVGAGVLGLPYAMSELGWGPGVVVLILSWVITLYTLWQMIEMHEMFEGQRFDRYHELGQAAFGKKLGLYIIVPLQLLVEISVCIVYMVTGGKSLKNVHDLALGDGDKCTKLRIQHFILIFASSQFVLSLLKNFNSISGVSLVAAVMSVSYSTIAWVASLRKGATTGSVEYGYRKRTTSVPLAFLSALGEMAFAYAGHNVVLEIQATIPSTPENPSKRPMWKGAVVAYIIVAFCYFPVALVGFKTFGNSVEESILESLTKPTALVIVANMFVVIHLLGSYQVYAMPVFDMIESVMIRIWHFSPTRVLRFTIRWTFVAATMGIAVGLPYYSALLSFFGGFVFAPTTYFIPCIMWLILKKPKRFSLSWCMNWFCIIFGLVLMIIAPIGGLAKLIYNIQKGTLPNSRCNLPKH.

Over 1-38 (MAGIPDHIQDQHLVEEDQPFDLEDWLPITASRNANWYY) the chain is Cytoplasmic. The chain crosses the membrane as a helical span at residues 39-59 (SAFHNVTAIVGAGVLGLPYAM). Residues 60 to 61 (SE) are Extracellular-facing. Residues 62-82 (LGWGPGVVVLILSWVITLYTL) traverse the membrane as a helical segment. The Cytoplasmic portion of the chain corresponds to 83 to 113 (WQMIEMHEMFEGQRFDRYHELGQAAFGKKLG). The helical transmembrane segment at 114–134 (LYIIVPLQLLVEISVCIVYMV) threads the bilayer. Over 135 to 158 (TGGKSLKNVHDLALGDGDKCTKLR) the chain is Extracellular. A helical membrane pass occupies residues 159 to 179 (IQHFILIFASSQFVLSLLKNF). At 180 to 181 (NS) the chain is on the cytoplasmic side. Residues 182-202 (ISGVSLVAAVMSVSYSTIAWV) form a helical membrane-spanning segment. The Extracellular segment spans residues 203 to 226 (ASLRKGATTGSVEYGYRKRTTSVP). A helical membrane pass occupies residues 227–247 (LAFLSALGEMAFAYAGHNVVL). Residues 248–267 (EIQATIPSTPENPSKRPMWK) lie on the Cytoplasmic side of the membrane. A helical transmembrane segment spans residues 268–288 (GAVVAYIIVAFCYFPVALVGF). Topologically, residues 289–307 (KTFGNSVEESILESLTKPT) are extracellular. Residues 308 to 328 (ALVIVANMFVVIHLLGSYQVY) traverse the membrane as a helical segment. Topologically, residues 329-357 (AMPVFDMIESVMIRIWHFSPTRVLRFTIR) are cytoplasmic. A helical membrane pass occupies residues 358–378 (WTFVAATMGIAVGLPYYSALL). A topological domain (extracellular) is located at residue Ser-379. Residues 380-400 (FFGGFVFAPTTYFIPCIMWLI) traverse the membrane as a helical segment. Topologically, residues 401–412 (LKKPKRFSLSWC) are cytoplasmic. Residues 413 to 433 (MNWFCIIFGLVLMIIAPIGGL) form a helical membrane-spanning segment. Over 434–455 (AKLIYNIQKGTLPNSRCNLPKH) the chain is Extracellular.

The protein belongs to the amino acid/polyamine transporter 2 family. Amino acid/auxin permease (AAAP) (TC 2.A.18.2) subfamily.

Its subcellular location is the cell membrane. Its function is as follows. Amino acid transporter. In Arabidopsis thaliana (Mouse-ear cress), this protein is Lysine histidine transporter-like 4.